Here is a 198-residue protein sequence, read N- to C-terminus: Neutrophil gelatinase-associated lipocalin (198 aa).

The N-terminal stretch at 1–20 (MPLGLLWLGLALLGALHAQA) is a signal peptide. Glutamine 21 is subject to Pyrrolidone carboxylic acid. Position 72–74 (72–74 (YAT)) interacts with a carboxymycobactin. Asparagine 85 is a glycosylation site (N-linked (GlcNAc...) asparagine). The cysteines at positions 96 and 195 are disulfide-linked. Tyrosine 126 is a binding site for enterobactin. A carboxymycobactin is bound by residues lysine 145, lysine 154, and tyrosine 158. Lysine 154 serves as a coordination point for enterobactin.

Belongs to the calycin superfamily. Lipocalin family. As to quaternary structure, monomer. Homodimer; disulfide-linked. Heterodimer; disulfide-linked with MMP9. As to expression, detected in neutrophils (at protein level). Expressed in bone marrow and in tissues that are prone to exposure to microorganism. High expression is found in bone marrow as well as in uterus, prostate, salivary gland, stomach, appendix, colon, trachea and lung. Expressed in the medullary tubules of the kidney. Not found in the small intestine or peripheral blood leukocytes.

The protein localises to the secreted. It localises to the cytoplasmic granule lumen. Its subcellular location is the cytoplasmic vesicle lumen. Iron-trafficking protein involved in multiple processes such as apoptosis, innate immunity and renal development. Binds iron through association with 2,3-dihydroxybenzoic acid (2,3-DHBA), a siderophore that shares structural similarities with bacterial enterobactin, and delivers or removes iron from the cell, depending on the context. Iron-bound form (holo-24p3) is internalized following binding to the SLC22A17 (24p3R) receptor, leading to release of iron and subsequent increase of intracellular iron concentration. In contrast, association of the iron-free form (apo-24p3) with the SLC22A17 (24p3R) receptor is followed by association with an intracellular siderophore, iron chelation and iron transfer to the extracellular medium, thereby reducing intracellular iron concentration. Involved in apoptosis due to interleukin-3 (IL3) deprivation: iron-loaded form increases intracellular iron concentration without promoting apoptosis, while iron-free form decreases intracellular iron levels, inducing expression of the proapoptotic protein BCL2L11/BIM, resulting in apoptosis. Involved in innate immunity; limits bacterial proliferation by sequestering iron bound to microbial siderophores, such as enterobactin. Can also bind siderophores from M.tuberculosis. The polypeptide is Neutrophil gelatinase-associated lipocalin (LCN2) (Homo sapiens (Human)).